The chain runs to 892 residues: Putative VWFA domain-containing protein ORF892 (892 aa).

The interval 109-548 (EEQLQRRPQR…RGYAHGDEDL (440 aa)) is disordered. Over residues 129 to 142 (SEVANQRVSRSAEN) the composition is skewed to polar residues. Residues 143–162 (QGKRGNEEKQQQKTPGKTEE) are compositionally biased toward basic and acidic residues. Residues 169–184 (ESGEEGNQQEESGEEQ) are compositionally biased toward acidic residues. Positions 185 to 196 (EGVKGSRSKQRE) are enriched in basic and acidic residues. Residues 212–223 (ESGESESEEGQS) are compositionally biased toward acidic residues. Composition is skewed to low complexity over residues 224–238 (SEET…GNQQ) and 271–283 (GNGQ…AQNG). Residues 287 to 300 (GESEGEITESESAS) show a composition bias toward acidic residues. The span at 301–323 (EEQTGSKGKSGQQGEEGQQQSGS) shows a compositional bias: low complexity. Acidic residues-rich tracts occupy residues 324–336 (EGEE…ESGE) and 425–448 (SESE…ETEE). Low complexity predominate over residues 453–466 (SEAEGTAAEGEVGQ). 2 stretches are compositionally biased toward polar residues: residues 467 to 481 (PSEQ…SGQR) and 512 to 531 (QTGS…QQGE). The segment covering 536 to 546 (EGGRGYAHGDE) has biased composition (basic and acidic residues). The stretch at 553-620 (QEINSILQTL…VQKLLKDLNV (68 aa)) forms a coiled coil. A VWFA domain is found at 723–892 (DFLFVIDSSG…GNIVLKRLVH (170 aa)).

The sequence is that of Putative VWFA domain-containing protein ORF892 from Acidianus two-tailed virus (ATV).